Consider the following 305-residue polypeptide: Probable lipid kinase YegS-like (305 aa).

The region spanning 2 to 134 (HPPAPALLII…DLAKVNDQRY (133 aa)) is the DAGKc domain. ATP-binding positions include T40, 66 to 72 (GDGTINE), and T95. Mg(2+)-binding residues include L215, D218, and L220. E271 (proton acceptor) is an active-site residue.

Belongs to the diacylglycerol/lipid kinase family. YegS lipid kinase subfamily. It depends on Mg(2+) as a cofactor. Ca(2+) is required as a cofactor.

It is found in the cytoplasm. Probably phosphorylates lipids; the in vivo substrate is unknown. In Serratia proteamaculans (strain 568), this protein is Probable lipid kinase YegS-like.